An 83-amino-acid chain; its full sequence is MKGMIMLISCLMLIDVVVESKNGYIIEPKGCKYSCSWGSSTWCNRECKFKKGSSGYCAWPACWCYGLPDNVKIFDYYNNKCGK.

A signal peptide spans 1 to 20 (MKGMIMLISCLMLIDVVVES). The 62-residue stretch at 21-82 (KNGYIIEPKG…IFDYYNNKCG (62 aa)) folds into the LCN-type CS-alpha/beta domain. 4 disulfides stabilise this stretch: cysteine 31/cysteine 81, cysteine 35/cysteine 57, cysteine 43/cysteine 62, and cysteine 47/cysteine 64. At cysteine 81 the chain carries Cysteine amide.

This sequence belongs to the long (4 C-C) scorpion toxin superfamily. Sodium channel inhibitor family. Beta subfamily. In terms of tissue distribution, expressed by the venom gland.

The protein resides in the secreted. Its function is as follows. Inhibits the sodium currents (Nav) in an apparent irreversible manner. Produces small depolarization and induces repetitive firing in squid axons. Is specific for arthropods (crickets, triatomides, crabs and squids), but is non-toxic to mice. This is Toxin TdNa3 from Tityus discrepans (Venezuelan scorpion).